Reading from the N-terminus, the 253-residue chain is Chitooligosaccharide deacetylase (253 aa).

2 residues coordinate Mg(2+): histidine 61 and histidine 126.

Belongs to the YdjC deacetylase family. ChbG subfamily. Homodimer. Requires Mg(2+) as cofactor.

It is found in the cytoplasm. It carries out the reaction N,N'-diacetylchitobiose + H2O = N-acetyl-beta-D-glucosaminyl-(1-&gt;4)-D-glucosamine + acetate. It catalyses the reaction diacetylchitobiose-6'-phosphate + H2O = N'-monoacetylchitobiose-6'-phosphate + acetate. The protein operates within glycan degradation; chitin degradation. Its function is as follows. Involved in the degradation of chitin. ChbG is essential for growth on the acetylated chitooligosaccharides chitobiose and chitotriose but is dispensable for growth on cellobiose and chitosan dimer, the deacetylated form of chitobiose. Deacetylation of chitobiose-6-P and chitotriose-6-P is necessary for both the activation of the chb promoter by the regulatory protein ChbR and the hydrolysis of phosphorylated beta-glucosides by the phospho-beta-glucosidase ChbF. Catalyzes the removal of only one acetyl group from chitobiose-6-P to yield monoacetylchitobiose-6-P, the inducer of ChbR and the substrate of ChbF. The protein is Chitooligosaccharide deacetylase of Yersinia pseudotuberculosis serotype O:1b (strain IP 31758).